Here is a 350-residue protein sequence, read N- to C-terminus: Flagellar filament outer layer protein (350 aa).

The first 20 residues, 1-20 (MKKAVVLSAVALLSGVCAVA), serve as a signal peptide directing secretion.

As to quaternary structure, the flagellum consists of an outer layer composed of repeating units of FlaA around a core that contains several antigenically related polypeptides.

The protein localises to the periplasmic flagellum. It localises to the periplasm. Component of the outer layer of the flagella. This is Flagellar filament outer layer protein (flaA) from Treponema pallidum (strain Nichols).